Consider the following 341-residue polypeptide: DNA-directed RNA polymerase subunit alpha (341 aa).

Positions 1 to 233 are alpha N-terminal domain (alpha-NTD); it reads MIRDEIPISA…NLFIPFLHAE (233 aa). Residues 265-341 are alpha C-terminal domain (alpha-CTD); it reads TKGVTFKHIF…NLPKNKLHFH (77 aa).

Belongs to the RNA polymerase alpha chain family. In terms of assembly, in plastids the minimal PEP RNA polymerase catalytic core is composed of four subunits: alpha, beta, beta', and beta''. When a (nuclear-encoded) sigma factor is associated with the core the holoenzyme is formed, which can initiate transcription.

Its subcellular location is the plastid. It localises to the chloroplast. It carries out the reaction RNA(n) + a ribonucleoside 5'-triphosphate = RNA(n+1) + diphosphate. In terms of biological role, DNA-dependent RNA polymerase catalyzes the transcription of DNA into RNA using the four ribonucleoside triphosphates as substrates. This is DNA-directed RNA polymerase subunit alpha from Takakia lepidozioides (Moss).